Consider the following 353-residue polypeptide: Rhodopsin (353 aa).

The Extracellular portion of the chain corresponds to 1–36 (MNGTEGPFFYVPMLNTTGIVRSPYDYPQYYLVNPAA). N-linked (GlcNAc...) asparagine glycosylation is found at Asn2 and Asn15. The chain crosses the membrane as a helical span at residues 37–61 (YAALGAYMFLLILLGFPINFLTLYV). Topologically, residues 62–73 (TIEHKKLRTPLN) are cytoplasmic. Residues 74–96 (YILLNLAVANLFMVFGGFTTTMY) form a helical membrane-spanning segment. Residues 97-110 (TSMHGYFVLGRLGC) lie on the Extracellular side of the membrane. Residues Cys110 and Cys187 are joined by a disulfide bond. The helical transmembrane segment at 111-133 (NLEGFFATLGGEIGLWSLVVLAI) threads the bilayer. A 'Ionic lock' involved in activated form stabilization motif is present at residues 134 to 136 (ERW). Over 134–152 (ERWMVVCKPISNFRFGENH) the chain is Cytoplasmic. Residues 153-173 (AIMGLAFTWIMACACAVPPLV) form a helical membrane-spanning segment. Residues 174–202 (GWSRYIPEGMQCSCGVDYYTRAEGFNNES) are Extracellular-facing. Asn200 is a glycosylation site (N-linked (GlcNAc...) asparagine). A helical membrane pass occupies residues 203-224 (FVVYMFICHFLIPMAVVFFCYG). Over 225–252 (RLLCAVKEAAAAQQESETTQRAEREVTR) the chain is Cytoplasmic. The helical transmembrane segment at 253 to 274 (MVVIMVVAFLICWLPYAGVAWW) threads the bilayer. Topologically, residues 275 to 286 (IFTHQGSEFGPV) are extracellular. The chain crosses the membrane as a helical span at residues 287 to 308 (FMTIPAFFAKSSSIYNPLIYIC). The residue at position 296 (Lys296) is an N6-(retinylidene)lysine. Residues 309–353 (MNKQFRHCMITTLCCGKNPFEEEEGASTTSKTEASSVSSSSVSPA) lie on the Cytoplasmic side of the membrane. 2 S-palmitoyl cysteine lipidation sites follow: Cys322 and Cys323. Positions 330–353 (EEEGASTTSKTEASSVSSSSVSPA) are disordered. Positions 334-353 (ASTTSKTEASSVSSSSVSPA) are enriched in low complexity.

The protein belongs to the G-protein coupled receptor 1 family. Opsin subfamily. Phosphorylated on some or all of the serine and threonine residues present in the C-terminal region. In terms of processing, contains one covalently linked retinal chromophore.

The protein resides in the membrane. Its subcellular location is the cell projection. It is found in the cilium. It localises to the photoreceptor outer segment. Its function is as follows. Photoreceptor required for image-forming vision at low light intensity. While most salt water fish species use retinal as chromophore, most freshwater fish use 3-dehydroretinal, or a mixture of retinal and 3-dehydroretinal. Light-induced isomerization of 11-cis to all-trans retinal triggers a conformational change that activates signaling via G-proteins. Subsequent receptor phosphorylation mediates displacement of the bound G-protein alpha subunit by arrestin and terminates signaling. In Tetraodon nigroviridis (Spotted green pufferfish), this protein is Rhodopsin (rho).